Here is a 141-residue protein sequence, read N- to C-terminus: Superoxide dismutase [Cu-Zn], chloroplastic (141 aa).

Positions 33, 35, and 50 each coordinate Cu cation. Cysteine 44 and cysteine 133 form a disulfide bridge. Zn(2+) is bound by residues histidine 50, histidine 58, histidine 67, and aspartate 70. Histidine 107 serves as a coordination point for Cu cation.

The protein belongs to the Cu-Zn superoxide dismutase family. In terms of assembly, homotetramer. It depends on Cu cation as a cofactor. Requires Zn(2+) as cofactor.

Its subcellular location is the plastid. It localises to the chloroplast. It catalyses the reaction 2 superoxide + 2 H(+) = H2O2 + O2. Functionally, destroys radicals which are normally produced within the cells and which are toxic to biological systems. This chain is Superoxide dismutase [Cu-Zn], chloroplastic (SODCP), found in Pinus sylvestris (Scotch pine).